The sequence spans 166 residues: MGGAQVLLLLTLLGTPLVTHGTPPLVVDPSIGSQLGLGSVLGLDLGSMGGSGRPPCRPINVTVAVEKEECPQCMAVTTTACGGYCRTREPVYRSPLGPPPQSSCTYGALRYERWDLWGCPIGSDPKVILPVALSCRCARCPIATSDCTVQGLGPAFCGAPGGFGGQ.

The signal sequence occupies residues 1 to 21 (MGGAQVLLLLTLLGTPLVTHG). Cystine bridges form between Cys-56–Cys-104, Cys-70–Cys-119, Cys-73–Cys-157, Cys-81–Cys-135, Cys-85–Cys-137, and Cys-140–Cys-147. A glycan (N-linked (GlcNAc...) asparagine) is linked at Asn-60.

It belongs to the glycoprotein hormones subunit beta family. As to quaternary structure, heterodimer of a common alpha chain and a unique beta chain which confers biological specificity to thyrotropin, lutropin, follitropin and gonadotropin.

The protein localises to the secreted. Its function is as follows. Promotes spermatogenesis and ovulation by stimulating the testes and ovaries to synthesize steroids. This is Lutropin subunit beta (LHB) from Coturnix japonica (Japanese quail).